The primary structure comprises 283 residues: Large ribosomal subunit protein uL2 (283 aa).

2 disordered regions span residues 34–53 and 224–283; these read TEPY…TARH and AMNP…KKKK. A compositionally biased stretch (gly residues) spans 232 to 245; that stretch reads NGGGQGKSKGGGGW. Residues 256–268 show a composition bias toward basic residues; it reads AKGKKTRHKRKNS.

Belongs to the universal ribosomal protein uL2 family. As to quaternary structure, part of the 50S ribosomal subunit. Forms a bridge to the 30S subunit in the 70S ribosome.

Its function is as follows. One of the primary rRNA binding proteins. Required for association of the 30S and 50S subunits to form the 70S ribosome, for tRNA binding and peptide bond formation. It has been suggested to have peptidyltransferase activity; this is somewhat controversial. Makes several contacts with the 16S rRNA in the 70S ribosome. In Methylacidiphilum infernorum (isolate V4) (Methylokorus infernorum (strain V4)), this protein is Large ribosomal subunit protein uL2.